The chain runs to 258 residues: MARRRQIYEGKAKILYEGPEPGTLIQYFKDDATAFNAQKRGTINGKGVLNNRISEHVFTLLGNIGVPTHFIRRLNMREQLIRQVEIVPIEVIVRNVAAGTLSKRLGIEEGTQLPRTLIEYCYKDDALGDPLVAEEHIACFNWCSQDELHDIQDMAIRINDFMSGMFAAVGIRLVDFKLEFGRLYEGDFSRIILADEISPDGCRLWDMTTNEKLDKDRFRRDLGGEVEAYQEVARRLGLLPEGGDNAVLDLESHRKKKG.

This sequence belongs to the SAICAR synthetase family.

It carries out the reaction 5-amino-1-(5-phospho-D-ribosyl)imidazole-4-carboxylate + L-aspartate + ATP = (2S)-2-[5-amino-1-(5-phospho-beta-D-ribosyl)imidazole-4-carboxamido]succinate + ADP + phosphate + 2 H(+). Its pathway is purine metabolism; IMP biosynthesis via de novo pathway; 5-amino-1-(5-phospho-D-ribosyl)imidazole-4-carboxamide from 5-amino-1-(5-phospho-D-ribosyl)imidazole-4-carboxylate: step 1/2. The chain is Phosphoribosylaminoimidazole-succinocarboxamide synthase from Sphingopyxis alaskensis (strain DSM 13593 / LMG 18877 / RB2256) (Sphingomonas alaskensis).